The sequence spans 319 residues: L-galactose dehydrogenase (319 aa).

The active-site Proton donor is the Tyr59. Residues 122–269 enclose the SIS domain; it reads HCHDIEFGSL…ANKEISSVLV (148 aa). His124 is a substrate binding site.

This sequence belongs to the aldo/keto reductase family.

It catalyses the reaction L-galactose + NAD(+) = L-galactono-1,4-lactone + NADH + H(+). In terms of biological role, catalyzes the oxidation of L-galactose to L-galactono-1,4-lactone in the presence of NAD(+). Uses NAD(+) as a hydrogen acceptor much more efficiently than NADP(+). The chain is L-galactose dehydrogenase (LGALDH) from Arabidopsis thaliana (Mouse-ear cress).